The chain runs to 499 residues: Probable cytosol aminopeptidase (499 aa).

The Mn(2+) site is built by Lys263 and Asp268. The active site involves Lys275. Residues Asp286, Asp345, and Glu347 each coordinate Mn(2+). Arg349 is an active-site residue.

Belongs to the peptidase M17 family. Mn(2+) is required as a cofactor.

It localises to the cytoplasm. The enzyme catalyses Release of an N-terminal amino acid, Xaa-|-Yaa-, in which Xaa is preferably Leu, but may be other amino acids including Pro although not Arg or Lys, and Yaa may be Pro. Amino acid amides and methyl esters are also readily hydrolyzed, but rates on arylamides are exceedingly low.. The catalysed reaction is Release of an N-terminal amino acid, preferentially leucine, but not glutamic or aspartic acids.. Functionally, presumably involved in the processing and regular turnover of intracellular proteins. Catalyzes the removal of unsubstituted N-terminal amino acids from various peptides. This chain is Probable cytosol aminopeptidase, found in Chlamydia trachomatis serovar A (strain ATCC VR-571B / DSM 19440 / HAR-13).